Here is an 838-residue protein sequence, read N- to C-terminus: Probable beta-glucosidase I (838 aa).

N-linked (GlcNAc...) asparagine glycosylation is found at Asn57 and Asn197. Asp225 is an active-site residue. One can recognise a PA14 domain in the interval 395–555; the sequence is EGEKGFKFRV…GQEELISKAA (161 aa). Residue Asn493 is glycosylated (N-linked (GlcNAc...) asparagine).

Belongs to the glycosyl hydrolase 3 family.

The protein localises to the secreted. It catalyses the reaction Hydrolysis of terminal, non-reducing beta-D-glucosyl residues with release of beta-D-glucose.. The protein operates within glycan metabolism; cellulose degradation. In terms of biological role, beta-glucosidases are one of a number of cellulolytic enzymes involved in the degradation of cellulosic biomass. Catalyzes the last step releasing glucose from the inhibitory cellobiose. The protein is Probable beta-glucosidase I (bglI) of Aspergillus clavatus (strain ATCC 1007 / CBS 513.65 / DSM 816 / NCTC 3887 / NRRL 1 / QM 1276 / 107).